The chain runs to 111 residues: Small ribosomal subunit protein bS16 (111 aa).

Belongs to the bacterial ribosomal protein bS16 family.

The protein is Small ribosomal subunit protein bS16 of Rickettsia typhi (strain ATCC VR-144 / Wilmington).